The primary structure comprises 242 residues: Type III pantothenate kinase (242 aa).

ATP is bound at residue 7 to 14 (DNSNTRTK). Residues Tyr88 and 95-98 (GADR) contribute to the substrate site. Asp97 functions as the Proton acceptor in the catalytic mechanism. Asp117 provides a ligand contact to K(+). Thr120 serves as a coordination point for ATP. Thr172 is a binding site for substrate.

Belongs to the type III pantothenate kinase family. In terms of assembly, homodimer. Requires NH4(+) as cofactor. The cofactor is K(+).

It is found in the cytoplasm. It catalyses the reaction (R)-pantothenate + ATP = (R)-4'-phosphopantothenate + ADP + H(+). It functions in the pathway cofactor biosynthesis; coenzyme A biosynthesis; CoA from (R)-pantothenate: step 1/5. Catalyzes the phosphorylation of pantothenate (Pan), the first step in CoA biosynthesis. The sequence is that of Type III pantothenate kinase from Akkermansia muciniphila (strain ATCC BAA-835 / DSM 22959 / JCM 33894 / BCRC 81048 / CCUG 64013 / CIP 107961 / Muc).